Consider the following 603-residue polypeptide: DNA mismatch repair protein MutL (603 aa).

It belongs to the DNA mismatch repair MutL/HexB family.

Functionally, this protein is involved in the repair of mismatches in DNA. It is required for dam-dependent methyl-directed DNA mismatch repair. May act as a 'molecular matchmaker', a protein that promotes the formation of a stable complex between two or more DNA-binding proteins in an ATP-dependent manner without itself being part of a final effector complex. The protein is DNA mismatch repair protein MutL of Rhodopseudomonas palustris (strain BisA53).